Here is a 225-residue protein sequence, read N- to C-terminus: Probable molybdenum cofactor guanylyltransferase (225 aa).

Residues 20–22, Lys33, Asp88, and Asp117 each bind GTP; that span reads LAG. Asp117 contributes to the Mg(2+) binding site.

The protein belongs to the MobA family. Mg(2+) is required as a cofactor.

The protein localises to the cytoplasm. The catalysed reaction is Mo-molybdopterin + GTP + H(+) = Mo-molybdopterin guanine dinucleotide + diphosphate. In terms of biological role, transfers a GMP moiety from GTP to Mo-molybdopterin (Mo-MPT) cofactor (Moco or molybdenum cofactor) to form Mo-molybdopterin guanine dinucleotide (Mo-MGD) cofactor. In Methanosarcina acetivorans (strain ATCC 35395 / DSM 2834 / JCM 12185 / C2A), this protein is Probable molybdenum cofactor guanylyltransferase.